The primary structure comprises 95 residues: FXYD domain-containing ion transport regulator 6 (95 aa).

The N-terminal stretch at 1–18 (MEVVLLFLCGLLAPAVLA) is a signal peptide. The Extracellular segment spans residues 19–35 (SATEQEKEKDPFHYDYQ). A helical membrane pass occupies residues 36–58 (TLRIGGLVFAVVLFSVGILLILS). Residues 59 to 95 (RRCKCSFNQKPRAPGDEEAQVENLVTANATEPQKAEN) lie on the Cytoplasmic side of the membrane. A disordered region spans residues 69 to 95 (PRAPGDEEAQVENLVTANATEPQKAEN).

It belongs to the FXYD family. As to quaternary structure, regulatory subunit of the sodium/potassium-transporting ATPase which is composed of a catalytic alpha subunit, a non-catalytic beta subunit and an additional regulatory subunit. The regulatory subunit, a member of the FXYD protein family, modulates the enzymatic activity in a tissue- and isoform-specific way by changing affinities of the Na+/K+-ATPase toward Na(+), K(+) or ATP.

The protein localises to the cell membrane. Associates with and regulates the activity of the sodium/potassium-transporting ATPase (NKA) which catalyzes the hydrolysis of ATP coupled with the exchange of Na(+) and K(+) ions across the plasma membrane. Reduces the apparent affinity for intracellular Na(+) with no change in the apparent affinity for extracellular K(+). In addition to modulating NKA kinetics, may also function as a regulator of NKA localization to the plasma membrane. The protein is FXYD domain-containing ion transport regulator 6 (FXYD6) of Bos taurus (Bovine).